A 440-amino-acid chain; its full sequence is GTPase Obg (440 aa).

The Obg domain occupies 5–163 (STFVDQTKIE…RTLRLELKVL (159 aa)). An OBG-type G domain is found at 164 to 338 (ADVGLVGFPS…LMSRAADLVS (175 aa)). Residues 170-177 (GFPSVGKS), 195-199 (FTTLK), 217-220 (DLPG), 288-291 (SQMD), and 319-321 (SSV) each bind GTP. 2 residues coordinate Mg(2+): S177 and T197. The 79-residue stretch at 362 to 440 (YHRPEKMEFT…IGDFSFEFVQ (79 aa)) folds into the OCT domain.

The protein belongs to the TRAFAC class OBG-HflX-like GTPase superfamily. OBG GTPase family. In terms of assembly, monomer. Mg(2+) is required as a cofactor.

It is found in the cytoplasm. An essential GTPase which binds GTP, GDP and possibly (p)ppGpp with moderate affinity, with high nucleotide exchange rates and a fairly low GTP hydrolysis rate. Plays a role in control of the cell cycle, stress response, ribosome biogenesis and in those bacteria that undergo differentiation, in morphogenesis control. This is GTPase Obg from Lactobacillus delbrueckii subsp. bulgaricus (strain ATCC BAA-365 / Lb-18).